The chain runs to 778 residues: Preasperterpenoid A synthase PvPS (778 aa).

The terpene cyclase stretch occupies residues 1 to 414 (MAATKKSTAT…HRYNFHKPAA (414 aa)). Asp-176 and Asp-180 together coordinate Mg(2+). Asp-176 provides a ligand contact to substrate. A DDXXD 1 motif is present at residues 176–180 (DDILD). Substrate is bound by residues 266-269 (RVIN), Asn-310, 314-318 (SWEKE), and 406-407 (RY). The NSE/DTE signature appears at 310–318 (NDYFSWEKE). Residues 414–431 (AKENEDTDDEGAKSDDSK) show a composition bias toward basic and acidic residues. Residues 415 to 778 (KENEDTDDEG…LRLLLKRLQV (364 aa)) are prenyltransferase. Residues 416–454 (ENEDTDDEGAKSDDSKTTLNDSTDSTVVDVKTPATSGLL) are disordered. Residues Lys-499, Arg-502, and His-531 each contribute to the isopentenyl diphosphate site. Asp-538 and Asp-542 together coordinate Mg(2+). The DDXXD 2 signature appears at 538-542 (DDIED). Arg-547 provides a ligand contact to dimethylallyl diphosphate. Residue Arg-548 coordinates isopentenyl diphosphate. 6 residues coordinate dimethylallyl diphosphate: Lys-625, Thr-626, Gln-662, Asn-669, Lys-679, and Lys-689.

It in the N-terminal section; belongs to the terpene synthase family. The protein in the C-terminal section; belongs to the FPP/GGPP synthase family. Hexamer. The cofactor is Mg(2+).

The catalysed reaction is isopentenyl diphosphate + (2E,6E)-farnesyl diphosphate = (2E,6E,10E)-geranylgeranyl diphosphate + diphosphate. It carries out the reaction isopentenyl diphosphate + (2E,6E,10E)-geranylgeranyl diphosphate = (2E,6E,10E,14E)-geranylfarnesyl diphosphate + diphosphate. The enzyme catalyses (2E,6E,10E,14E)-geranylfarnesyl diphosphate = preasperterpenoid A + diphosphate. It functions in the pathway secondary metabolite biosynthesis; terpenoid biosynthesis. Its function is as follows. Bifunctional sesterterpene synthase that possesses both prenyl transferase and terpene cyclase activity, converting isopentenyl diphosphate and dimethylallyl diphosphate into geranylfarnesyl diphosphate (GFPP) and further converting GFPP into preasperterpenoid A. This Talaromyces verruculosus (Penicillium verruculosum) protein is Preasperterpenoid A synthase PvPS.